The primary structure comprises 571 residues: DDB1- and CUL4-associated factor 11 homolog (571 aa).

The tract at residues 51 to 75 (RMKPNHSNDSDTDFSSDDEGCPKMT) is disordered. The span at 60 to 69 (SDTDFSSDDE) shows a compositional bias: acidic residues. 6 WD repeats span residues 162 to 201 (RVAT…SKYR), 266 to 305 (RDHC…RIRT), 309 to 349 (AHED…DGDV), 357 to 396 (GHRD…NMSG), 435 to 479 (GHSV…VSRR), and 482 to 521 (GHTA…EGVI).

It belongs to the WD repeat LEC14B family.

In terms of biological role, involved in regulation of lifespan. Required for dopaminergic CEP neuron degeneration in response to Mn(2+). Inhibits the skn-1-mediated up-regulation of tatn-1. The sequence is that of DDB1- and CUL4-associated factor 11 homolog from Caenorhabditis elegans.